A 341-amino-acid chain; its full sequence is Inner membrane ABC transporter permease protein YejE (341 aa).

At 1–21 the chain is on the cytoplasmic side; it reads MSRLSPVNQARWARFRHNRRG. A helical membrane pass occupies residues 22 to 42; that stretch reads YWSLWIFLVLFGLSLCSELIA. At 43 to 143 the chain is on the periplasmic side; it reads NDKPLLVRYD…ARILYGTRIS (101 aa). In terms of domain architecture, ABC transmembrane type-1 spans 140–332; the sequence is TRISVLFGLM…LLIFIGEAVR (193 aa). A helical membrane pass occupies residues 144 to 164; the sequence is VLFGLMLTLCSSVMGVLAGAL. The Cytoplasmic portion of the chain corresponds to 165 to 178; that stretch reads QGYYGGKVDLWGQR. Residues 179–199 traverse the membrane as a helical segment; it reads FIEVWSGMPTLFLIILLSSVV. Residues 200–201 are Periplasmic-facing; that stretch reads QP. The chain crosses the membrane as a helical span at residues 202–222; the sequence is NFWWLLAITVLFGWMSLVGVV. The Cytoplasmic segment spans residues 223 to 252; it reads RAEFLRTRNFDYIRAAQALGVSDRSIILRH. The chain crosses the membrane as a helical span at residues 253–273; it reads MLPNAMVATLTFLPFILCSSI. Topologically, residues 274 to 307 are periplasmic; it reads TTLTSLDFLGFGLPLGSPSLGELLLQGKNNLQAP. The chain crosses the membrane as a helical span at residues 308–328; that stretch reads WLGITAFLSVAILLSLLIFIG. The Cytoplasmic portion of the chain corresponds to 329–341; that stretch reads EAVRDAFDPNKAV.

It belongs to the binding-protein-dependent transport system permease family. OppBC subfamily.

It is found in the cell inner membrane. Functionally, probably part of a binding-protein-dependent transport system. Probably responsible for the translocation of the substrate across the membrane. The chain is Inner membrane ABC transporter permease protein YejE (yejE) from Escherichia coli (strain K12).